The following is a 273-amino-acid chain: Large ribosomal subunit protein uL2 (273 aa).

A disordered region spans residues 221 to 263 (RGTAMNPVDHPHGGGEGRNFGKHPVTPWGVQTKGKKTRHNKRT). Basic residues predominate over residues 253–263 (KGKKTRHNKRT).

The protein belongs to the universal ribosomal protein uL2 family. Part of the 50S ribosomal subunit. Forms a bridge to the 30S subunit in the 70S ribosome.

Functionally, one of the primary rRNA binding proteins. Required for association of the 30S and 50S subunits to form the 70S ribosome, for tRNA binding and peptide bond formation. It has been suggested to have peptidyltransferase activity; this is somewhat controversial. Makes several contacts with the 16S rRNA in the 70S ribosome. This is Large ribosomal subunit protein uL2 from Histophilus somni (strain 2336) (Haemophilus somnus).